A 174-amino-acid polypeptide reads, in one-letter code: Shikimate kinase 2 (174 aa).

12 to 17 is a binding site for ATP; that stretch reads GAGKTT. Mg(2+)-binding residues include Thr-16 and Asp-32. Positions 34, 58, and 79 each coordinate substrate. Residues 112-126 are LID domain; it reads MQQPESTQRPSLTGK. ATP is bound at residue Arg-120. Arg-139 contributes to the substrate binding site.

This sequence belongs to the shikimate kinase family. AroL subfamily. As to quaternary structure, monomer. Mg(2+) is required as a cofactor.

The protein localises to the cytoplasm. It catalyses the reaction shikimate + ATP = 3-phosphoshikimate + ADP + H(+). The protein operates within metabolic intermediate biosynthesis; chorismate biosynthesis; chorismate from D-erythrose 4-phosphate and phosphoenolpyruvate: step 5/7. Its function is as follows. Catalyzes the specific phosphorylation of the 3-hydroxyl group of shikimic acid using ATP as a cosubstrate. This is Shikimate kinase 2 from Photorhabdus laumondii subsp. laumondii (strain DSM 15139 / CIP 105565 / TT01) (Photorhabdus luminescens subsp. laumondii).